Here is a 503-residue protein sequence, read N- to C-terminus: ATP synthase subunit alpha (503 aa).

169 to 176 (GDRKTGKT) is a binding site for ATP.

The protein belongs to the ATPase alpha/beta chains family. F-type ATPases have 2 components, CF(1) - the catalytic core - and CF(0) - the membrane proton channel. CF(1) has five subunits: alpha(3), beta(3), gamma(1), delta(1), epsilon(1). CF(0) has three main subunits: a(1), b(2) and c(9-12). The alpha and beta chains form an alternating ring which encloses part of the gamma chain. CF(1) is attached to CF(0) by a central stalk formed by the gamma and epsilon chains, while a peripheral stalk is formed by the delta and b chains.

The protein resides in the cell membrane. The catalysed reaction is ATP + H2O + 4 H(+)(in) = ADP + phosphate + 5 H(+)(out). Increases 2-fold following exposure to low pH. Produces ATP from ADP in the presence of a proton gradient across the membrane. The alpha chain is a regulatory subunit. This chain is ATP synthase subunit alpha, found in Lactobacillus acidophilus (strain ATCC 700396 / NCK56 / N2 / NCFM).